The chain runs to 637 residues: GTP-binding protein 4 (637 aa).

Ala-2 is subject to N-acetylalanine. An N6-acetyllysine; alternate modification is found at Lys-103. A Glycyl lysine isopeptide (Lys-Gly) (interchain with G-Cter in SUMO2); alternate cross-link involves residue Lys-103. Ser-122 carries the phosphoserine modification. One can recognise an OBG-type G domain in the interval 169–340 (RTLLLCGYPN…VKTEACDRLL (172 aa)). GTP contacts are provided by residues 175 to 182 (GYPNVGKS), 221 to 225 (DTPGI), and 289 to 292 (SKCE). A Glycyl lysine isopeptide (Lys-Gly) (interchain with G-Cter in SUMO2) cross-link involves residue Lys-332. Disordered regions lie at residues 499–518 (SKEK…KVQR) and 525–637 (MRSL…KERR). Lys-535 is covalently cross-linked (Glycyl lysine isopeptide (Lys-Gly) (interchain with G-Cter in SUMO2)). The span at 542–555 (VRARRSRSVTRKRK) shows a compositional bias: basic residues. Ser-559 carries the post-translational modification Phosphoserine. A compositionally biased stretch (low complexity) spans 563–574 (SSIARSRSRSCS). Basic and acidic residues predominate over residues 576–588 (TPRDVSGLRDVKM). Basic residues predominate over residues 589–607 (VKKAKTMMKKAQKKMNRLG). The segment covering 608 to 621 (KKGEADRHVFDMKP) has biased composition (basic and acidic residues). Basic residues predominate over residues 622-637 (KHLLSGKRKAGKKERR).

This sequence belongs to the TRAFAC class OBG-HflX-like GTPase superfamily. OBG GTPase family. NOG subfamily. Associates with pre-60S ribosomal particles. Interacts with MINAS-60 (product of an alternative open reading frame of RBM10).

It is found in the nucleus. The protein localises to the nucleolus. In terms of biological role, involved in the biogenesis of the 60S ribosomal subunit. Acts as TP53 repressor, preventing TP53 stabilization and cell cycle arrest. This Rattus norvegicus (Rat) protein is GTP-binding protein 4 (Gtpbp4).